The following is a 1173-amino-acid chain: MSRQDENSALLANNENNKPSYTGNENGVYDNFKLSKSQLSDLHNPKSIRSFVRLFGYESNSLFKYLKTDKNAGISLPEISNYRKTNRYKNYGDNSLPERIPKSFLQLVWAAFNDKTMQLLTVAAVVSFVLGLYELWMQPPQYDPEGNKIKQVDWIEGVAIMIAVFVVVLVSAANDYQKELQFAKLNKKKENRKIIVIRNDQEILISIHHVLVGDVISLQTGDVVPADCVMISGKCEADESSITGESNTIQKFPVDNSLRDFKKFNSIDSHNHSKPLDIGDVNEDGNKIADCMLISGSRILSGLGRGVITSVGINSVYGQTMTSLNAEPESTPLQLHLSQLADNISVYGCVSAIILFLVLFTRYLFYIIPEDGRFHDLDPAQKGSKFMNIFITSITVIVVAVPEGLPLAVTLALAFATTRMTKDGNLVRVLRSCETMGSATAVCSDKTGTLTENVMTVVRGFPGNSKFDDSKSLPVSEQRKLNSKKVFEENCSSSLRNDLLANIVLNSTAFENRDYKKNDKNTNGSKNMSKNLSFLDKCKSRLSFFKKGNREDDEDQLFKNVNKGRQEPFIGSKTETALLSLARLSLGLQPGELQYLRDQPMEKFNIEKVVQTIPFESSRKWAGLVVKYKEGKNKKPFYRFFIKGAAEIVSKNCSYKRNSDDTLEEINEDNKKETDDEIKNLASDALRAISVAHKDFCECDSWPPEQLRDKDSPNIAALDLLFNSQKGLILDGLLGIQDPLRAGVRESVQQCQRAGVTVRMVTGDNILTAKAIARNCAILSTDISSEAYSAMEGTEFRKLTKNERIRILPNLRVLARSSPEDKRLLVETLKGMGDVVAVTGDGTNDAPALKLADVGFSMGISGTEVAREASDIILMTDDFSAIVNAIKWGRCVSVSIKKFIQFQLIVNITAVILTFVSSVASSDETSVLTAVQLLWINLIMDTLAALALATDKPDPNIMDRKPRGRSTSLISVSTWKMILSQATLQLIVTFILHFYGPELFFKKHEDEITSHQQQQLNAMTFNTFVWLQFFTMLVSRKLDEGDGISNWRGRISAANLNFFQDLGRNYYFLTIMAIIGSCQVLIMFFGGAPFSIARQTKSMWITAVLCGMLSLIMGVLVRICPDEVAVKVFPAAFVQRFKYVFGLEFLRKNHTGKHDDEEALLEESDSPESTAFY.

The disordered stretch occupies residues 1-24; the sequence is MSRQDENSALLANNENNKPSYTGN. Topologically, residues 1 to 114 are cytoplasmic; the sequence is MSRQDENSAL…LQLVWAAFND (114 aa). Over residues 7-17 the composition is skewed to low complexity; the sequence is NSALLANNENN. Residues 115-139 form a helical membrane-spanning segment; it reads KTMQLLTVAAVVSFVLGLYELWMQP. Residues 140–152 are Vacuolar-facing; it reads PQYDPEGNKIKQV. The chain crosses the membrane as a helical span at residues 153–173; the sequence is DWIEGVAIMIAVFVVVLVSAA. The Cytoplasmic portion of the chain corresponds to 174–349; it reads NDYQKELQFA…LADNISVYGC (176 aa). A helical membrane pass occupies residues 350 to 368; it reads VSAIILFLVLFTRYLFYII. The Vacuolar portion of the chain corresponds to 369–388; it reads PEDGRFHDLDPAQKGSKFMN. Residues 389 to 409 traverse the membrane as a helical segment; the sequence is IFITSITVIVVAVPEGLPLAV. Ca(2+) contacts are provided by valine 398 and glutamate 403. Over 410–899 the chain is Cytoplasmic; the sequence is TLALAFATTR…RCVSVSIKKF (490 aa). Aspartate 445 acts as the 4-aspartylphosphate intermediate in catalysis. Residues aspartate 445 and threonine 447 each contribute to the Mg(2+) site. Residues threonine 447, lysine 643, 762 to 764, arginine 816, and lysine 822 contribute to the ATP site; that span reads TGD. Aspartate 841 serves as a coordination point for Mg(2+). Asparagine 844 is an ATP binding site. A helical transmembrane segment spans residues 900 to 922; that stretch reads IQFQLIVNITAVILTFVSSVASS. Residue asparagine 907 participates in Ca(2+) binding. Topologically, residues 923–929 are vacuolar; that stretch reads DETSVLT. A helical transmembrane segment spans residues 930–950; that stretch reads AVQLLWINLIMDTLAALALAT. Positions 937 and 941 each coordinate Ca(2+). The Cytoplasmic portion of the chain corresponds to 951–976; the sequence is DKPDPNIMDRKPRGRSTSLISVSTWK. A helical transmembrane segment spans residues 977 to 998; the sequence is MILSQATLQLIVTFILHFYGPE. Residues 999 to 1010 are Vacuolar-facing; sequence LFFKKHEDEITS. Residues 1011-1029 traverse the membrane as a helical segment; it reads HQQQQLNAMTFNTFVWLQF. The Cytoplasmic segment spans residues 1030-1065; that stretch reads FTMLVSRKLDEGDGISNWRGRISAANLNFFQDLGRN. A helical transmembrane segment spans residues 1066-1086; the sequence is YYFLTIMAIIGSCQVLIMFFG. Residues 1087–1099 lie on the Vacuolar side of the membrane; that stretch reads GAPFSIARQTKSM. Residues 1100 to 1120 traverse the membrane as a helical segment; that stretch reads WITAVLCGMLSLIMGVLVRIC. Residues 1121 to 1173 are Cytoplasmic-facing; the sequence is PDEVAVKVFPAAFVQRFKYVFGLEFLRKNHTGKHDDEEALLEESDSPESTAFY.

It belongs to the cation transport ATPase (P-type) (TC 3.A.3) family.

It localises to the vacuole membrane. The enzyme catalyses Ca(2+)(in) + ATP + H2O = Ca(2+)(out) + ADP + phosphate + H(+). This magnesium-dependent enzyme catalyzes the hydrolysis of ATP coupled with the transport of calcium. Transports the calcium to the vacuole and participates in the control of the cytosolic free calcium. This Saccharomyces cerevisiae (strain ATCC 204508 / S288c) (Baker's yeast) protein is Calcium-transporting ATPase 2 (PMC1).